The sequence spans 310 residues: ADP-L-glycero-D-manno-heptose-6-epimerase (310 aa).

NADP(+) is bound by residues 10–11 (FI), 31–32 (DN), lysine 38, lysine 53, 75–79 (EGACS), and asparagine 92. The Proton acceptor role is filled by tyrosine 140. Position 144 (lysine 144) interacts with NADP(+). Asparagine 169 contacts substrate. Valine 170 and lysine 178 together coordinate NADP(+). Residue lysine 178 is the Proton acceptor of the active site. Substrate-binding positions include serine 180, histidine 187, 201-204 (FEGS), and arginine 209. Lysine 267 bears the N6-acetyllysine mark. Tyrosine 272 serves as a coordination point for substrate.

This sequence belongs to the NAD(P)-dependent epimerase/dehydratase family. HldD subfamily. Homopentamer. NADP(+) is required as a cofactor.

It catalyses the reaction ADP-D-glycero-beta-D-manno-heptose = ADP-L-glycero-beta-D-manno-heptose. Its pathway is nucleotide-sugar biosynthesis; ADP-L-glycero-beta-D-manno-heptose biosynthesis; ADP-L-glycero-beta-D-manno-heptose from D-glycero-beta-D-manno-heptose 7-phosphate: step 4/4. In terms of biological role, catalyzes the interconversion between ADP-D-glycero-beta-D-manno-heptose and ADP-L-glycero-beta-D-manno-heptose via an epimerization at carbon 6 of the heptose. This chain is ADP-L-glycero-D-manno-heptose-6-epimerase, found in Escherichia coli (strain ATCC 8739 / DSM 1576 / NBRC 3972 / NCIMB 8545 / WDCM 00012 / Crooks).